We begin with the raw amino-acid sequence, 1066 residues long: Ubiquitin conjugation factor E4 A (1066 aa).

Residues 33–57 (KEQLKQQSDELPASPDDSDNSVSES) are disordered. K386 is modified (N6-acetyllysine). The 75-residue stretch at 987–1061 (DACDEFLDPI…QRWLAERKQQ (75 aa)) folds into the U-box domain.

The protein belongs to the ubiquitin conjugation factor E4 family.

It localises to the cytoplasm. It carries out the reaction S-ubiquitinyl-[E2 ubiquitin-conjugating enzyme]-L-cysteine + [acceptor protein]-L-lysine = [E2 ubiquitin-conjugating enzyme]-L-cysteine + N(6)-ubiquitinyl-[acceptor protein]-L-lysine.. The protein operates within protein modification; protein ubiquitination. Functionally, ubiquitin-protein ligase that probably functions as an E3 ligase in conjunction with specific E1 and E2 ligases. May also function as an E4 ligase mediating the assembly of polyubiquitin chains on substrates ubiquitinated by another E3 ubiquitin ligase. Mediates 'Lys-48'-linked polyubiquitination of substrates. The chain is Ubiquitin conjugation factor E4 A from Pongo abelii (Sumatran orangutan).